Consider the following 425-residue polypeptide: Trigger factor (425 aa).

A PPIase FKBP-type domain is found at 163 to 248 (GDTAVIDFEG…VHEIKTKELP (86 aa)).

Belongs to the FKBP-type PPIase family. Tig subfamily.

It localises to the cytoplasm. It catalyses the reaction [protein]-peptidylproline (omega=180) = [protein]-peptidylproline (omega=0). Functionally, involved in protein export. Acts as a chaperone by maintaining the newly synthesized protein in an open conformation. Functions as a peptidyl-prolyl cis-trans isomerase. This chain is Trigger factor, found in Bacillus anthracis (strain A0248).